Consider the following 433-residue polypeptide: Pyrimidine-nucleoside phosphorylase (433 aa).

81–83 (KHS) is a phosphate binding site. K(+) is bound by residues G88 and T90. Residues T92, 108-110 (KMS), and T120 contribute to the phosphate site. R168 and K187 together coordinate substrate. Positions 243, 246, and 255 each coordinate K(+).

Belongs to the thymidine/pyrimidine-nucleoside phosphorylase family. In terms of assembly, homodimer. K(+) serves as cofactor.

The enzyme catalyses uridine + phosphate = alpha-D-ribose 1-phosphate + uracil. The catalysed reaction is thymidine + phosphate = 2-deoxy-alpha-D-ribose 1-phosphate + thymine. It catalyses the reaction 2'-deoxyuridine + phosphate = 2-deoxy-alpha-D-ribose 1-phosphate + uracil. In terms of biological role, catalyzes phosphorolysis of the pyrimidine nucleosides uridine, thymidine and 2'-deoxyuridine with the formation of the corresponding pyrimidine base and ribose-1-phosphate. This chain is Pyrimidine-nucleoside phosphorylase (pdp), found in Geobacillus stearothermophilus (Bacillus stearothermophilus).